Here is a 356-residue protein sequence, read N- to C-terminus: Serpentine receptor class epsilon-29 (356 aa).

7 helical membrane-spanning segments follow: residues 29–49 (IVELFSYLICAYILTLNIYII), 61–81 (ILAIPLFGIWFELIIGKLITI), 119–139 (LLIFGGFLQWHYMFTIIFGVL), 161–181 (LFIPLFLTVISQFLSISTSLA), 190–210 (FLAQLPWIICCPFSAMAYFFV), 251–271 (LVFVVLSCIALCGIGITALFY), and 281–301 (FVENFLFLHPYLSCLTAIFSV).

It belongs to the nematode receptor-like protein sre family.

The protein localises to the membrane. In Caenorhabditis elegans, this protein is Serpentine receptor class epsilon-29 (sre-29).